We begin with the raw amino-acid sequence, 81 residues long: MNPIISAASVIAAGFAVGLASIGPGIGQGTAAGRAVEGIARQPEAEGKIRGTLLLSLAFMEALTIYGLVVALALLFANPFI.

The next 2 helical transmembrane spans lie at 3 to 23 (PIIS…ASIG) and 57 to 77 (LAFM…LLFA).

The protein belongs to the ATPase C chain family. F-type ATPases have 2 components, F(1) - the catalytic core - and F(0) - the membrane proton channel. F(1) has five subunits: alpha(3), beta(3), gamma(1), delta(1), epsilon(1). F(0) has four main subunits: a(1), b(1), b'(1) and c(10-14). The alpha and beta chains form an alternating ring which encloses part of the gamma chain. F(1) is attached to F(0) by a central stalk formed by the gamma and epsilon chains, while a peripheral stalk is formed by the delta, b and b' chains.

Its subcellular location is the plastid membrane. In terms of biological role, f(1)F(0) ATP synthase produces ATP from ADP in the presence of a proton or sodium gradient. F-type ATPases consist of two structural domains, F(1) containing the extramembraneous catalytic core and F(0) containing the membrane proton channel, linked together by a central stalk and a peripheral stalk. During catalysis, ATP synthesis in the catalytic domain of F(1) is coupled via a rotary mechanism of the central stalk subunits to proton translocation. Its function is as follows. Key component of the F(0) channel; it plays a direct role in translocation across the membrane. A homomeric c-ring of between 10-14 subunits forms the central stalk rotor element with the F(1) delta and epsilon subunits. In Cuscuta gronovii (Common dodder), this protein is ATP synthase subunit C, plastid.